Consider the following 60-residue polypeptide: Large ribosomal subunit protein uL30 (60 aa).

It belongs to the universal ribosomal protein uL30 family. In terms of assembly, part of the 50S ribosomal subunit.

The protein is Large ribosomal subunit protein uL30 of Albidiferax ferrireducens (strain ATCC BAA-621 / DSM 15236 / T118) (Rhodoferax ferrireducens).